Reading from the N-terminus, the 307-residue chain is Mitochondrial brown fat uncoupling protein 1 (307 aa).

Residues 1–10 (MVSQTTSEVQ) are Mitochondrial intermembrane-facing. A helical transmembrane segment spans residues 11-32 (PTMGVKIFSAGVAACLADIITF). Solcar repeat units lie at residues 11–102 (PTMG…VQEY), 111–201 (PTLV…MKGA), and 210–295 (DDVP…LKKE). At 33–73 (PLDTAKVRLQIQGEGQTSSTIRYKGVLGTITTLAKTEGLPK) the chain is on the mitochondrial matrix side. Lysine 56 is a fatty acid 16:0 binding site. The helical transmembrane segment at 74 to 96 (LYSGLPAGIQRQISFASLRIGLY) threads the bilayer. The Mitochondrial intermembrane portion of the chain corresponds to 97-116 (DTVQEYFSSGKETPPTLVNR). A helical membrane pass occupies residues 117–133 (ISAGLMTGGVAVFIGQP). The Mitochondrial matrix segment spans residues 134–178 (TEVVKVRLQAQSHLHGIKPRYTGTYNAYRIIATTESLSTLWKGTT). Residues 179–195 (PNLLRNVIINCTELVTY) traverse the membrane as a helical segment. At 196 to 212 (DLMKGALVNNQILADDV) the chain is on the mitochondrial intermembrane side. The chain crosses the membrane as a helical span at residues 213–232 (PCHLLSALVAGFCTTFLASP). Over 233–266 (ADVVKTRFINSLPGQYPSVPSCAMTMFTKEGPTA) the chain is Mitochondrial matrix. Cysteine 254 carries the post-translational modification Cysteine sulfenic acid (-SOH). Residues 267-289 (FFKGFVPSFLRLASWNVIMFVCF) traverse the membrane as a helical segment. Lysine 269 lines the fatty acid 16:0 pocket. Topologically, residues 290 to 307 (EQLKKELMKSRQTVDCTT) are mitochondrial intermembrane.

This sequence belongs to the mitochondrial carrier (TC 2.A.29) family. Most probably functions as a monomer. Binds one purine nucleotide per monomer. However, has also been suggested to function as a homodimer or a homotetramer. Tightly associates with cardiolipin in the mitochondrion inner membrane; may stabilize and regulate its activity. May undergo sulfenylation upon cold exposure. May increase the sensitivity of UCP1 thermogenic function to the activation by noradrenaline probably through structural effects. In terms of processing, may undergo ubiquitin-mediated proteasomal degradation. As to expression, brown adipose tissue.

The protein localises to the mitochondrion inner membrane. It carries out the reaction H(+)(in) = H(+)(out). With respect to regulation, has no constitutive proton transporter activity and has to be activated by long-chain fatty acids/LCFAs. Inhibited by purine nucleotides. Both purine nucleotides and LCFAs bind the cytosolic side of the transporter and directly compete to activate or inhibit it. Activated by noradrenaline and reactive oxygen species. Despite lacking canonical translational encoding for selenocysteine, a small pool of the protein has been observed to selectively incorporate selenocysteine at 'Cys-254'. Selenocysteine-modified protein is highly sensitive to redox modification and may constitute a pool of protein highly sensitive to activation by elevated levels of reactive oxygen species (ROS). Mitochondrial protein responsible for thermogenic respiration, a specialized capacity of brown adipose tissue and beige fat that participates in non-shivering adaptive thermogenesis to temperature and diet variations and more generally to the regulation of energy balance. Functions as a long-chain fatty acid/LCFA and proton symporter, simultaneously transporting one LCFA and one proton through the inner mitochondrial membrane. However, LCFAs remaining associated with the transporter via their hydrophobic tails, it results in an apparent transport of protons activated by LCFAs. Thereby, dissipates the mitochondrial proton gradient and converts the energy of substrate oxydation into heat instead of ATP. Regulates the production of reactive oxygen species/ROS by mitochondria. This is Mitochondrial brown fat uncoupling protein 1 from Phodopus sungorus (Striped hairy-footed hamster).